A 498-amino-acid chain; its full sequence is NADPH:adrenodoxin oxidoreductase, mitochondrial (498 aa).

The N-terminal 37 residues, 1–37 (MSTHKAALCKVQILKLFLISARCVRITRFYGVCGLST), are a transit peptide targeting the mitochondrion. Residues Ala54, Glu75, Leu83, and Val119 each coordinate FAD. Residues 190–193 (QGNV), 234–235 (RR), and Glu246 each bind NADP(+). FAD contacts are provided by residues Trp404 and 411–413 (GVI). Residue Gly411 coordinates NADP(+). Residues 469–488 (DSEETRRGETRGKPREKMLD) show a composition bias toward basic and acidic residues. Residues 469-489 (DSEETRRGETRGKPREKMLDV) are disordered.

This sequence belongs to the ferredoxin--NADP reductase type 1 family. FAD is required as a cofactor.

The protein resides in the mitochondrion inner membrane. It catalyses the reaction 2 reduced [adrenodoxin] + NADP(+) + H(+) = 2 oxidized [adrenodoxin] + NADPH. It functions in the pathway steroid metabolism; cholesterol metabolism. Functionally, serves as the first electron transfer protein in all the mitochondrial P450 systems including cholesterol side chain cleavage in all steroidogenic tissues, steroid 11-beta hydroxylation in the adrenal cortex, 25-OH-vitamin D3-24 hydroxylation in the kidney, and sterol C-27 hydroxylation in the liver. This chain is NADPH:adrenodoxin oxidoreductase, mitochondrial (fdxr), found in Salvelinus fontinalis (Brook trout).